An 87-amino-acid polypeptide reads, in one-letter code: Pyocin-S1 immunity protein (87 aa).

Belongs to the colicins ColE2/ColE8/ColE9 and pyocins S1/S2 family.

This Pseudomonas aeruginosa protein is Pyocin-S1 immunity protein (imm1).